The following is a 91-amino-acid chain: UPF0298 protein OB1449 (91 aa).

The protein belongs to the UPF0298 family.

The protein localises to the cytoplasm. The sequence is that of UPF0298 protein OB1449 from Oceanobacillus iheyensis (strain DSM 14371 / CIP 107618 / JCM 11309 / KCTC 3954 / HTE831).